Reading from the N-terminus, the 415-residue chain is MKADLVVGIQWGDEGKGKIVDSMASAYDVVVRYQGGHNAGHTIVVDGKKIALHLIPSGILYADCKNVIGNGVVVNPEALLKEMKQFEALEGRLFVSDKAHMILPYHEMLDQAREKLMEERAIGTTGKGIGPAYSDKISRNGIRMGELRDIPKLVEKIMEYQEAHAYLSDIYGVKLLGREEITERMSDYAKRLLPFIVDTTKLLWDAMDRGQRILLEGAQGSMLDIDHGTYPFVTSSTTTASGACSGTGLAPKHIGEVVGIAKAYCTRVGNGPFPTEDFGSEGNLLREKGKEFGTTTGRPRRCGWFDAIAVRHACRLNGCENLALMKLDVLDGFPEVKVCVAYLYEGKEIDYIPYDCEGVTPVYKSFAGWDHSEGIREFDALPKSAKEYVLEIEKITGARVSIISTGPDRKDTIRR.

GTP-binding positions include 12–18 (GDEGKGK) and 40–42 (GHT). D13 serves as the catalytic Proton acceptor. Mg(2+) contacts are provided by D13 and G40. Residues 13–16 (DEGK), 38–41 (NAGH), T125, R139, Q219, T234, and R298 each bind IMP. The active-site Proton donor is H41. 294–300 (TTTGRPR) provides a ligand contact to substrate. GTP-binding positions include R300, 326-328 (KLD), and 404-406 (STG).

It belongs to the adenylosuccinate synthetase family. In terms of assembly, homodimer. The cofactor is Mg(2+).

The protein resides in the cytoplasm. The catalysed reaction is IMP + L-aspartate + GTP = N(6)-(1,2-dicarboxyethyl)-AMP + GDP + phosphate + 2 H(+). It participates in purine metabolism; AMP biosynthesis via de novo pathway; AMP from IMP: step 1/2. Its function is as follows. Plays an important role in the de novo pathway of purine nucleotide biosynthesis. Catalyzes the first committed step in the biosynthesis of AMP from IMP. The sequence is that of Adenylosuccinate synthetase from Wolinella succinogenes (strain ATCC 29543 / DSM 1740 / CCUG 13145 / JCM 31913 / LMG 7466 / NCTC 11488 / FDC 602W) (Vibrio succinogenes).